The primary structure comprises 438 residues: Neutral metalloprotease ShpI (438 aa).

A signal peptide spans 1-26; sequence MINKKKLVTSLVTSSLLATFTLGSFA. Positions 27–101 are excised as a propeptide; it reads DAHTYIINNE…KSENALSNSK (75 aa). Position 242 (H242) interacts with Zn(2+). Residue E243 is part of the active site. The Zn(2+) site is built by H246 and E269.

Belongs to the peptidase M30 family. The cofactor is Zn(2+). Several different N-terminal ends may be produced, the favored N-terminus is position 102.

The protein resides in the secreted. Inhibited by metal- and zinc-specific inhibitors, such as EDTA and 1,10-phenanthroline in vitro. Is resistant to all inhibitors of serine, cysteine and aspartic proteases. Its function is as follows. Protease that has a low substrate specificity. Catalyzes the hydrolysis of glucagon, melittin and oxidized beta-insulin at various positions in vitro. Is not able to cleave elastin or the synthetic substrates FAGLA (a substrate for neutral proteinases) and FALGPA (a substrate for collagenase). The chain is Neutral metalloprotease ShpI from Staphylococcus hyicus.